A 180-amino-acid chain; its full sequence is Guanosine-3',5'-bis(diphosphate) 3'-pyrophosphohydrolase MESH1 (180 aa).

An HD domain is found at 33–128; it reads YINHPIGVAR…VKLADKLYNL (96 aa). His-36, His-62, and Asp-63 together coordinate Mn(2+). Catalysis depends on nucleophile residues Glu-66 and Asp-67. Asp-123 serves as a coordination point for Mn(2+).

It belongs to the MESH1 family. Mn(2+) is required as a cofactor.

It carries out the reaction guanosine 3',5'-bis(diphosphate) + H2O = GDP + diphosphate + H(+). In terms of biological role, ppGpp hydrolyzing enzyme involved in starvation response. The sequence is that of Guanosine-3',5'-bis(diphosphate) 3'-pyrophosphohydrolase MESH1 (hddc3) from Danio rerio (Zebrafish).